We begin with the raw amino-acid sequence, 82 residues long: Apovitellenin-1 (82 aa).

This sequence belongs to the apovitellenin family. As to quaternary structure, monomer. As to expression, found in egg yolk and in plasma.

In terms of biological role, protein component of the very low density lipoprotein (VLDL) of egg-laying females. Potent lipoprotein lipase inhibitor, preventing the loss of triglycerides from VLDL on their way from the liver to the growing oocytes. The polypeptide is Apovitellenin-1 (Meleagris gallopavo (Wild turkey)).